Consider the following 713-residue polypeptide: Vacuolar amino acid transporter 4 (713 aa).

The segment at Met1 to Gln33 is disordered. The Vacuolar portion of the chain corresponds to Met1–Asn242. The segment covering His21–Gln33 has biased composition (polar residues). The residue at position 88 (Ser88) is a Phosphoserine. The tract at residues Arg99–Ser121 is disordered. A phosphoserine mark is found at Ser130 and Ser165. Residues Lys200–Ile233 are disordered. Low complexity predominate over residues Ser221–Gln231. Residues Phe243 to Ile263 traverse the membrane as a helical segment. Residues Pro264 to Lys301 lie on the Cytoplasmic side of the membrane. Residues Val302–Phe322 traverse the membrane as a helical segment. Over His323–Gly326 the chain is Vacuolar. Residues Leu327–Ile347 traverse the membrane as a helical segment. Residues Leu348–Arg373 lie on the Cytoplasmic side of the membrane. A helical membrane pass occupies residues Ile374–Phe394. Residues Thr395–Gly410 lie on the Vacuolar side of the membrane. Residues Val411–Ile431 traverse the membrane as a helical segment. Over Arg432–Ser438 the chain is Cytoplasmic. The chain crosses the membrane as a helical span at residues Leu439 to Thr459. Over Ala460–Arg483 the chain is Vacuolar. Residues Trp484–Val504 traverse the membrane as a helical segment. Residues Gln505–Pro515 lie on the Cytoplasmic side of the membrane. A helical membrane pass occupies residues Leu516–Gly536. The Vacuolar portion of the chain corresponds to Tyr537–Leu561. Residues Ile562 to Ile582 traverse the membrane as a helical segment. The Cytoplasmic portion of the chain corresponds to Lys583 to Lys621. Residues Trp622–Gly642 traverse the membrane as a helical segment. The Vacuolar segment spans residues Ser643–Lys648. The helical transmembrane segment at Phe649–Leu669 threads the bilayer. Residues His670 to Thr692 are Cytoplasmic-facing. The chain crosses the membrane as a helical span at residues Ile693–Phe711. The Vacuolar segment spans residues Gly712–Val713.

Belongs to the amino acid/polyamine transporter 2 family.

It localises to the vacuole membrane. In terms of biological role, involved in amino acid efflux from the vacuole to the cytoplasm. Capable of transporting large neutral amino acids including tyrosine, glutamine, asparagine, isoleucine and leucine. This chain is Vacuolar amino acid transporter 4 (AVT4), found in Saccharomyces cerevisiae (strain ATCC 204508 / S288c) (Baker's yeast).